Consider the following 428-residue polypeptide: Spliceosome RNA helicase Ddx39b (428 aa).

Positions 1–19 are enriched in acidic residues; sequence MAENDVDNELLDYEDDEVE. The segment at 1-31 is disordered; the sequence is MAENDVDNELLDYEDDEVETAAGADGTEAPA. Ala2 is subject to N-acetylalanine. Residue Lys36 is modified to N6-acetyllysine; alternate. Lys36 is covalently cross-linked (Glycyl lysine isopeptide (Lys-Gly) (interchain with G-Cter in SUMO2); alternate). Phosphoserine is present on residues Ser38 and Ser41. The Q motif signature appears at 45-73; the sequence is SGFRDFLLKPELLRAIVDCGFEHPSEVQH. Residues 76 to 249 enclose the Helicase ATP-binding domain; sequence IPQAILGMDV…RKFMQDPMEI (174 aa). 89-96 is an ATP binding site; sequence AKSGMGKT. Phosphothreonine is present on Thr172. The short motif at 196-199 is the DECD box element; that stretch reads DECD. The 162-residue stretch at 261–422 folds into the Helicase C-terminal domain; that stretch reads GLQQYYVKLK…ELPDEIDISS (162 aa).

It belongs to the DEAD box helicase family. DECD subfamily. As to quaternary structure, homodimer, and heterodimer with DDX39A. DDX39B interacts with the THO subcomplex to form the THO-DDX39B complex which multimerizes into a 28-subunit tetrameric assembly. Component of the transcription/export (TREX) complex at least composed of ALYREF/THOC4, DDX39B, SARNP/CIP29, CHTOP and the THO subcomplex; in the complex interacts with THOC2. THOC1-THOC2-THOC3-DDX39B subcomplex is sufficient for the interaction with export factor NXF1-NXT1. TREX seems to have a dynamic structure involving ATP-dependent remodeling. Within the TREX complex bridges ALYREF/THOC4 and the THO subcomplex, and, in a ATP-dependent manner, ALYREF/THOC4 and SARNP/CIP29. Component of the spliceosome. Interacts directly with U2AF2. Interacts with RBM8A, RNPS1 and SRRM1, FYTTD1/UIF, THOC1, MX1 and POLDIP3. Interacts with LUZP4. Interacts with SARNP/CIP29 (via the C-terminal domain); the interaction is direct and facilitates RNA binding of DDX39B.

The protein localises to the nucleus. It is found in the nucleus speckle. The protein resides in the cytoplasm. It catalyses the reaction ATP + H2O = ADP + phosphate + H(+). Its function is as follows. Involved in nuclear export of spliced and unspliced mRNA. Component of the TREX complex which is thought to couple mRNA transcription, processing and nuclear export, and specifically associates with spliced mRNA and not with unspliced pre-mRNA. The TREX complex is recruited to spliced mRNAs by a transcription-independent mechanism, binds to mRNA upstream of the exon-junction complex (EJC) and is recruited in a splicing- and cap-dependent manner to a region near the 5' end of the mRNA where it functions in mRNA export to the cytoplasm via the TAP/NXF1 pathway. The THOC1-THOC2-THOC3 core complex alone is sufficient to promote ATPase activity of DDX39B; in the complex THOC2 is the only component that directly interacts with DDX39B. Associates with SARNP/CIP29, which facilitates RNA binding of DDX39B and likely plays a role in mRNA export. May undergo several rounds of ATP hydrolysis during assembly of TREX to drive subsequent loading of components such as ALYREF/THOC4 and CHTOP onto mRNA. Also associates with pre-mRNA independent of ALYREF/THOC4. Involved in the nuclear export of intronless mRNA; the ATP-bound form is proposed to recruit export adapter ALYREF/THOC4 to intronless mRNA; its ATPase activity is cooperatively stimulated by RNA and ALYREF/THOC4 and ATP hydrolysis is thought to trigger the dissociation from RNA to allow the association of ALYREF/THOC4 and the NXF1-NXT1 heterodimer. Involved in transcription elongation and genome stability. Functionally, splice factor that is required for the first ATP-dependent step in spliceosome assembly and for the interaction of U2 snRNP with the branchpoint. Has both RNA-stimulated ATP binding/hydrolysis activity and ATP-dependent RNA unwinding activity. Even with the stimulation of RNA, the ATPase activity is weak. Can only hydrolyze ATP but not other NTPs. The RNA stimulation of ATPase activity does not have a strong preference for the sequence and length of the RNA. However, ssRNA stimulates the ATPase activity much more strongly than dsRNA. Can unwind 5' or 3' overhangs or blunt end RNA duplexes in vitro. The ATPase and helicase activities are not influenced by U2AF2; the effect of ALYREF/THOC4 is reported conflictingly. The chain is Spliceosome RNA helicase Ddx39b (Ddx39b) from Mus musculus (Mouse).